The following is a 118-amino-acid chain: MTSQSQGIHQLLQAEKRAKDKLEEAKKRKGKRLKQAKEEAMVEIDQYRMQRDKEFRLKQSKIMGSQNNLSDEIEEQTLGKIQELNGHYNKYMESVMNQLLSMVCDMKPEIHVNYRATN.

A disordered region spans residues 1 to 34 (MTSQSQGIHQLLQAEKRAKDKLEEAKKRKGKRLK). A coiled-coil region spans residues 5–54 (SQGIHQLLQAEKRAKDKLEEAKKRKGKRLKQAKEEAMVEIDQYRMQRDKE). A compositionally biased stretch (basic and acidic residues) spans 14-26 (AEKRAKDKLEEAK).

Belongs to the V-ATPase G subunit family. As to quaternary structure, V-ATPase is a heteromultimeric enzyme made up of two complexes: the ATP-hydrolytic V1 complex and the proton translocation V0 complex. The V1 complex consists of three catalytic AB heterodimers that form a heterohexamer, three peripheral stalks each consisting of EG heterodimers, one central rotor including subunits D and F, and the regulatory subunits C and H. The proton translocation complex V0 consists of the proton transport subunit a, a ring of proteolipid subunits c9c'', rotary subunit d, subunits e and f, and the accessory subunits ATP6AP1/Ac45 and ATP6AP2/PRR. Kidney.

In terms of biological role, subunit of the V1 complex of vacuolar(H+)-ATPase (V-ATPase), a multisubunit enzyme composed of a peripheral complex (V1) that hydrolyzes ATP and a membrane integral complex (V0) that translocates protons. V-ATPase is responsible for acidifying and maintaining the pH of intracellular compartments and in some cell types, is targeted to the plasma membrane, where it is responsible for acidifying the extracellular environment. The polypeptide is V-type proton ATPase subunit G 3 (ATP6V1G3) (Homo sapiens (Human)).